The chain runs to 186 residues: MVKLAAKCILAGDPAVGKTALVQMFRSDGTHFQKNYTLTTGVDLVVKTVPVLDTNDSVELFIFDSAGKELFSEMLDKLWENPNVLCLVYDVTNEQSFISCTKWLEKVRSQTSGISLPGVLVGTKTDLAGRQTVDSAQAQVWALSQGLEFFETSVKEMDNYEAPFHCLAKQFYQLYREKVDIFHTLV.

Residues 12–19 (GDPAVGKT), 64–68 (DSAGK), and 123–126 (TKTD) each bind GTP.

The protein belongs to the small GTPase superfamily. Rab family. As to quaternary structure, component of the IFT complex B, at least composed of IFT20, IFT22, IFT25, IFT27, IFT46, IFT52, TRAF3IP1/IFT54, IFT57, IFT74, IFT80, IFT81, and IFT88. Interacts with IFT25. Interacts with IFT70B. Interacts with RABL2/RABL2A; binding is equal in the presence of GTP or GDP. Interacts with IFT88. Interacts with ARL6; recognizes and binds with the GTP-free form of ARL6. As to expression, expressed predominantly in the testis (at protein level). Co-localizes with RABL2/RABL2A in the midpiece of elongated spermatids within the testis (at protein level).

It is found in the cell projection. Its subcellular location is the cilium. It localises to the cytoplasm. The protein resides in the flagellum. Its function is as follows. Small GTPase-like component of the intraflagellar transport (IFT) complex B that promotes the exit of the BBSome complex from cilia via its interaction with ARL6. Not involved in entry of the BBSome complex into cilium. Prevents aggregation of GTP-free ARL6. Required for hedgehog signaling. Forms a subcomplex within the IFT complex B with IFT25. Its role in intraflagellar transport is mainly seen in tissues rich in ciliated cells such as kidney and testis. Essential for male fertility, spermiogenesis and sperm flagella formation. Plays a role in the early development of the kidney. May be involved in the regulation of ureteric bud initiation. This chain is Intraflagellar transport protein 27 homolog (Ift27), found in Mus musculus (Mouse).